The chain runs to 230 residues: Response regulator MprA (230 aa).

Positions 4-118 constitute a Response regulatory domain; sequence RILVVDDDRA…ELLARMRALL (115 aa). At aspartate 48 the chain carries 4-aspartylphosphate. A DNA-binding region (ompR/PhoB-type) is located at residues 129–227; sequence SMAMRFSDLT…VRGVGYVLRE (99 aa).

As to quaternary structure, monomer. Interaction with each conserved 8-bp repeat requires tandem binding by two protein monomers. In terms of processing, phosphorylated and dephosphorylated by MprB.

It is found in the cytoplasm. Functionally, member of the two-component regulatory system MprB/MprA which contributes to maintaining a balance among several systems involved in stress resistance and is required for establishment and maintenance of persistent infection in the host. Functions as a transcriptional regulator that recognizes a 19-bp nucleotide motif comprizing two loosely conserved 8-bp direct DNA-binding motif repeats separated by a 3-bp spacer region. MprB/MprA up-regulates expression of mprA and pepD. In Mycobacterium bovis (strain ATCC BAA-935 / AF2122/97), this protein is Response regulator MprA (mprA).